The primary structure comprises 586 residues: Protein cereblon (586 aa).

Disordered stretches follow at residues 1-114 (MDDE…LPRW) and 158-194 (SQER…IDIG). Over residues 14-37 (GRDEDVQLEDHSQAQGLQDRRVDA) the composition is skewed to basic and acidic residues. Residues 75–85 (MVEDGLQDDTA) show a composition bias toward acidic residues. The span at 86–96 (SEGSHPSSDMS) shows a compositional bias: polar residues. Positions 159 to 168 (QERRRSRTSE) are enriched in basic and acidic residues. The segment covering 170 to 179 (TSQEDVEQPE) has biased composition (acidic residues). The segment covering 180 to 190 (DPPPQQPPRPP) has biased composition (pro residues). The Lon N-terminal domain maps to 226–452 (HMLIFLHQHI…LIKSTFTDES (227 aa)). In terms of domain architecture, CULT spans 451 to 560 (ESLFFCRYCN…LAGSSVRIGK (110 aa)). Zn(2+) contacts are provided by Cys456, Cys459, Cys525, and Cys528.

It belongs to the CRBN family. As to quaternary structure, likely a component of a DCX (DDB1-CUL4-X-box) protein ligase complex. May interact with pic/DDB1. In terms of processing, ubiquitinated.

Its subcellular location is the nucleus. The protein operates within protein modification; protein ubiquitination. Functionally, substrate recognition component of a DCX (DDB1-CUL4-X-box) E3 protein ligase complex that mediates the ubiquitination and subsequent proteasomal degradation of target proteins. Has an essential role in mediating growth by negatively regulating insulin signaling. It also has a role in maintaining presynaptic function in the neuromuscular junction synapses of third-instar larvae. The sequence is that of Protein cereblon from Drosophila erecta (Fruit fly).